Consider the following 303-residue polypeptide: MNPQELKSILSEGLLSFPLTDFDVAGDFRADTYAKRLEWLAPYGASALFAAGGTGEFFSLQASEYSEIIKVAVDTCRGEVPILAGTGGPTRQAIAYAQEAERLGAAGVLLLPHYLTEASQEGLVSHVEQVCKSVDFGVVVYNRNVCRLNADSLEKLADRCPNLIGFKDGVGDIESMVSIRRRLGERLTYLGGLPTAEVYAAAYKAMGVPVYSSAVFNFIPKTAMDFYRAVASEDHETVGKLIDDFFLPYLDIRNRCEGYGVSIVKAGARLVGHDAGPVRAPLTDLLPNEMEQLDALIKKLGAQ.

This sequence belongs to the DapA family.

It catalyses the reaction 5-dehydro-4-deoxy-D-glucarate + H(+) = 2,5-dioxopentanoate + CO2 + H2O. Its pathway is carbohydrate acid metabolism; D-glucarate degradation; 2,5-dioxopentanoate from D-glucarate: step 2/2. In Pseudomonas putida (Arthrobacter siderocapsulatus), this protein is 5-dehydro-4-deoxyglucarate dehydratase.